We begin with the raw amino-acid sequence, 678 residues long: Protein CASP (678 aa).

Residues 1–619 (MAANVGSMFQ…LVLSNKMART (619 aa)) lie on the Cytoplasmic side of the membrane. Coiled-coil stretches lie at residues 67–450 (LLKS…QDLS) and 502–556 (LSII…FLQS). At Ser-586 the chain carries Phosphoserine. A helical; Anchor for type IV membrane protein transmembrane segment spans residues 620 to 640 (IGFFYTLFLHCLVFLVLYKLA). Over 641–678 (WSESMERDCATFCAKKFADHLHKFHENDNGAAAGDLWQ) the chain is Lumenal.

This sequence belongs to the CASP family. In terms of assembly, homodimer; disulfide-linked. Interacts with GOLGA5.

It localises to the golgi apparatus membrane. May be involved in intra-Golgi retrograde transport. The protein is Protein CASP (CUTL1) of Pongo abelii (Sumatran orangutan).